Consider the following 950-residue polypeptide: Glycine dehydrogenase (decarboxylating) (950 aa).

Lysine 698 carries the N6-(pyridoxal phosphate)lysine modification.

It belongs to the GcvP family. As to quaternary structure, the glycine cleavage system is composed of four proteins: P, T, L and H. Requires pyridoxal 5'-phosphate as cofactor.

It carries out the reaction N(6)-[(R)-lipoyl]-L-lysyl-[glycine-cleavage complex H protein] + glycine + H(+) = N(6)-[(R)-S(8)-aminomethyldihydrolipoyl]-L-lysyl-[glycine-cleavage complex H protein] + CO2. Functionally, the glycine cleavage system catalyzes the degradation of glycine. The P protein binds the alpha-amino group of glycine through its pyridoxal phosphate cofactor; CO(2) is released and the remaining methylamine moiety is then transferred to the lipoamide cofactor of the H protein. The chain is Glycine dehydrogenase (decarboxylating) from Neisseria meningitidis serogroup C / serotype 2a (strain ATCC 700532 / DSM 15464 / FAM18).